The chain runs to 881 residues: Beta-mannosidase (881 aa).

The first 18 residues, 1 to 18 (MHLHLLFLLALCGAGCMA), serve as a signal peptide directing secretion. Asn35, Asn77, Asn89, and Asn113 each carry an N-linked (GlcNAc...) asparagine glycan. Cys167 and Cys176 are oxidised to a cystine. 190–192 (WDW) serves as a coordination point for substrate. N-linked (GlcNAc...) asparagine glycosylation is found at Asn226, Asn297, and Asn302. Position 456 (Asn456) interacts with substrate. Catalysis depends on Glu457, which acts as the Proton donor. 3 cysteine pairs are disulfide-bonded: Cys540/Cys629, Cys732/Cys761, and Cys764/Cys769. Glu554 (nucleophile) is an active-site residue. Residue Asn803 is glycosylated (N-linked (GlcNAc...) asparagine).

It belongs to the glycosyl hydrolase 2 family. Monomer.

It is found in the lysosome. It carries out the reaction Hydrolysis of terminal, non-reducing beta-D-mannose residues in beta-D-mannosides.. Its pathway is glycan metabolism; N-glycan degradation. In terms of biological role, exoglycosidase that cleaves the single beta-linked mannose residue from the non-reducing end of all N-linked glycoprotein oligosaccharides. This Rattus norvegicus (Rat) protein is Beta-mannosidase.